The chain runs to 719 residues: Potassium-transporting ATPase ATP-binding subunit (719 aa).

Transmembrane regions (helical) follow at residues 35–55 (LFVVELGTIIGLVMTIAPGLF), 62–82 (VYYAVITVLLGFTVIFANYAE), 228–248 (ILLSGLTLVFVVAVATMFFFG), and 254–274 (FVGGFAGLDVAELVALLVALM). Aspartate 318 acts as the 4-aspartylphosphate intermediate in catalysis. The ATP site is built by aspartate 355 and glutamate 359. Residues 372–396 (GKVQTDGGQSASEELDEPGDSVDAP) form a disordered region. A compositionally biased stretch (polar residues) spans 373–383 (KVQTDGGQSAS). ATP contacts are provided by residues 416–423 (FSAETRMS) and lysine 435. Residues aspartate 554 and aspartate 558 each coordinate Mg(2+). 3 helical membrane-spanning segments follow: residues 624–644 (FVLLPAILAAAIPGLGAMDIL), 652–672 (AVTATLMYNAFIIPLLIPLAL), and 698–718 (LIAPFIFIKAIDMLFVALGVF).

This sequence belongs to the cation transport ATPase (P-type) (TC 3.A.3) family. Type IA subfamily. As to quaternary structure, the system is composed of three essential subunits: KdpA, KdpB and KdpC. The complex also contains KdpF, a small non-essential subunit.

The protein localises to the cell membrane. The catalysed reaction is K(+)(out) + ATP + H2O = K(+)(in) + ADP + phosphate + H(+). In terms of biological role, part of the high-affinity ATP-driven potassium transport (or Kdp) system, which catalyzes the hydrolysis of ATP coupled with the electrogenic transport of potassium into the cytoplasm. This subunit is responsible for energy coupling to the transport system and for the release of the potassium ions to the cytoplasm. The Kdp system is essential for growth under K(+) limitation, and for survival under desiccation and salt crystal inclusion. The chain is Potassium-transporting ATPase ATP-binding subunit from Halobacterium salinarum (strain ATCC 29341 / DSM 671 / R1).